The following is a 449-amino-acid chain: Glucose-6-phosphate isomerase (449 aa).

Glu-291 serves as the catalytic Proton donor. Residues His-312 and Lys-426 contribute to the active site.

This sequence belongs to the GPI family.

Its subcellular location is the cytoplasm. The enzyme catalyses alpha-D-glucose 6-phosphate = beta-D-fructose 6-phosphate. It functions in the pathway carbohydrate biosynthesis; gluconeogenesis. It participates in carbohydrate degradation; glycolysis; D-glyceraldehyde 3-phosphate and glycerone phosphate from D-glucose: step 2/4. Catalyzes the reversible isomerization of glucose-6-phosphate to fructose-6-phosphate. In Streptococcus pyogenes serotype M5 (strain Manfredo), this protein is Glucose-6-phosphate isomerase.